Consider the following 279-residue polypeptide: Diaminopimelate epimerase 1 (279 aa).

Substrate is bound by residues asparagine 13 and asparagine 66. The active-site Proton donor is the cysteine 75. Residues 76 to 77 (GN), asparagine 164, asparagine 197, and 215 to 216 (ER) each bind substrate. The Proton acceptor role is filled by cysteine 224. 225–226 (GT) is a substrate binding site.

The protein belongs to the diaminopimelate epimerase family. Homodimer.

Its subcellular location is the cytoplasm. The catalysed reaction is (2S,6S)-2,6-diaminopimelate = meso-2,6-diaminopimelate. It participates in amino-acid biosynthesis; L-lysine biosynthesis via DAP pathway; DL-2,6-diaminopimelate from LL-2,6-diaminopimelate: step 1/1. Catalyzes the stereoinversion of LL-2,6-diaminopimelate (L,L-DAP) to meso-diaminopimelate (meso-DAP), a precursor of L-lysine and an essential component of the bacterial peptidoglycan. The sequence is that of Diaminopimelate epimerase 1 from Nostoc sp. (strain PCC 7120 / SAG 25.82 / UTEX 2576).